The following is a 519-amino-acid chain: Molybdate transporter 1 (519 aa).

The next 7 membrane-spanning stretches (helical) occupy residues 98 to 118 (LLHA…SQAI), 164 to 184 (LGTE…ATTL), 370 to 390 (AVAL…AMPC), 412 to 432 (ILLG…LVVL), 436 to 456 (FPQP…ASVV), 464 to 484 (GYTF…TGTG), and 485 to 505 (FLVG…VAAA).

It belongs to the SLC26A/SulP transporter (TC 2.A.53) family.

The protein resides in the membrane. With respect to regulation, 60% inhibition by 20 uM tungstate or by lack of glucose in the medium, but no inhibition by sulfate. Its function is as follows. High affinity molybdate transporter. Acts through an energy-dependent process. This chain is Molybdate transporter 1 (MOT1), found in Chlamydomonas reinhardtii (Chlamydomonas smithii).